A 101-amino-acid chain; its full sequence is Small ribosomal subunit protein bS6 (101 aa).

The protein belongs to the bacterial ribosomal protein bS6 family.

Binds together with bS18 to 16S ribosomal RNA. The chain is Small ribosomal subunit protein bS6 from Nitratidesulfovibrio vulgaris (strain ATCC 29579 / DSM 644 / CCUG 34227 / NCIMB 8303 / VKM B-1760 / Hildenborough) (Desulfovibrio vulgaris).